The following is a 566-amino-acid chain: MKQSKLFMPTLREVPSDAEAISHQLLLRAGFMRQNAAGIYSYLPLAKRVLSKIETIIRQEMEGAGAQELLMPAIQPAELWEETGRWDIYGPELMRLTDRHDRRFALGATHEELITSIVRDELNSYKKLPVNLFQIQMKYRDERRPRFGLLRGREFIMKDAYSFHSTQESLEEEYQNMFDAYTKIFTRVGLEFRPVVADSGAIGGSGTHEFHALAAIGEDTIVYSDQSDYAANLEMAESVDQYTKQDKAPEALEEVHTGDAKTIEAVSSVLGLPEQESIKTVVFKTEQGLVMALVRGDHEVNDIKLKNYLGALDIMMATDEEIEQALHSTPGTLGPIGADMKIVADYAVRALTNSVCGANKSETHYVHVDPSRDFEAEYTDLRFVEEGDVSPDGQGHVKFARGIEVGQVFKLGTRYSEGMNATFLDEGGKAQPLIMGCYGIGVSRTMSAVVEQHYDERGIIWPKAIAPFDVHLIAVNGKNAEQLEVAETVYRELTAAGFSVLFDDRKERAGVKFADADLIGLPVRINVGKKAPDGIVELKARRGGEAEEIQQADLLEAVRSLYEGLQ.

The protein belongs to the class-II aminoacyl-tRNA synthetase family. ProS type 1 subfamily. As to quaternary structure, homodimer.

The protein resides in the cytoplasm. It carries out the reaction tRNA(Pro) + L-proline + ATP = L-prolyl-tRNA(Pro) + AMP + diphosphate. Its function is as follows. Catalyzes the attachment of proline to tRNA(Pro) in a two-step reaction: proline is first activated by ATP to form Pro-AMP and then transferred to the acceptor end of tRNA(Pro). As ProRS can inadvertently accommodate and process non-cognate amino acids such as alanine and cysteine, to avoid such errors it has two additional distinct editing activities against alanine. One activity is designated as 'pretransfer' editing and involves the tRNA(Pro)-independent hydrolysis of activated Ala-AMP. The other activity is designated 'posttransfer' editing and involves deacylation of mischarged Ala-tRNA(Pro). The misacylated Cys-tRNA(Pro) is not edited by ProRS. The sequence is that of Proline--tRNA ligase from Exiguobacterium sibiricum (strain DSM 17290 / CCUG 55495 / CIP 109462 / JCM 13490 / 255-15).